The following is a 600-amino-acid chain: Kynurenine 3-monooxygenase (600 aa).

Residues 217-242 are disordered; that stretch reads GDSCADEPSGCGGRKQATTKSQGSEY.

It belongs to the aromatic-ring hydroxylase family. KMO subfamily. FAD serves as cofactor.

Its subcellular location is the mitochondrion outer membrane. The catalysed reaction is L-kynurenine + NADPH + O2 + H(+) = 3-hydroxy-L-kynurenine + NADP(+) + H2O. It participates in cofactor biosynthesis; NAD(+) biosynthesis; quinolinate from L-kynurenine: step 1/3. Its function is as follows. Catalyzes the hydroxylation of L-kynurenine (L-Kyn) to form 3-hydroxy-L-kynurenine (L-3OHKyn). Required for synthesis of quinolinic acid. This is Kynurenine 3-monooxygenase from Mycosarcoma maydis (Corn smut fungus).